The following is a 151-amino-acid chain: Ribonuclease H (151 aa).

In terms of domain architecture, RNase H type-1 spans 5–146 (ALPHVTIFTD…ADQLAREGVA (142 aa)). Residues Asp14, Glu52, Asp74, and Asp138 each contribute to the Mg(2+) site.

The protein belongs to the RNase H family. Monomer. Mg(2+) is required as a cofactor.

Its subcellular location is the cytoplasm. The enzyme catalyses Endonucleolytic cleavage to 5'-phosphomonoester.. Its function is as follows. Endonuclease that specifically degrades the RNA of RNA-DNA hybrids. The protein is Ribonuclease H of Nitrobacter hamburgensis (strain DSM 10229 / NCIMB 13809 / X14).